Here is a 481-residue protein sequence, read N- to C-terminus: Delta(14)-sterol reductase ERG24B (481 aa).

A run of 8 helical transmembrane segments spans residues 11–31 (FGGP…MQVL), 80–100 (LFAY…QIVL), 125–145 (LTGC…WTWI), 149–169 (YIQL…WTYL), 244–264 (TYGF…YYVL), 279–299 (ITSD…VPFL), 313–333 (HLGP…LYIF), and 427–447 (AAPW…FLLI).

Belongs to the ERG4/ERG24 family.

The protein localises to the endoplasmic reticulum membrane. The catalysed reaction is 4,4-dimethyl-5alpha-cholesta-8,24-dien-3beta-ol + NADP(+) = 4,4-dimethyl-5alpha-cholesta-8,14,24-trien-3beta-ol + NADPH + H(+). It functions in the pathway steroid metabolism; ergosterol biosynthesis. Functionally, delta(14)-sterol reductase; part of the third module of ergosterol biosynthesis pathway that includes the late steps of the pathway. Catalyzes the reduction of the C14=C15 double bond within 4,4,24-trimethyl ergosta-8,14,24(28)-trienolto produce 4,4-dimethylfecosterol. The third module or late pathway involves the ergosterol synthesis itself through consecutive reactions that mainly occur in the endoplasmic reticulum (ER) membrane. Firstly, the squalene synthase ERG9 catalyzes the condensation of 2 farnesyl pyrophosphate moieties to form squalene, which is the precursor of all steroids. Squalene synthase is crucial for balancing the incorporation of farnesyl diphosphate (FPP) into sterol and nonsterol isoprene synthesis. Secondly, squalene is converted into lanosterol by the consecutive action of the squalene epoxidase ERG1 and the lanosterol synthase ERG7. Then, the delta(24)-sterol C-methyltransferase ERG6 methylates lanosterol at C-24 to produce eburicol. Eburicol is the substrate of the sterol 14-alpha demethylase encoded by CYP51A, CYP51B and CYP51C, to yield 4,4,24-trimethyl ergosta-8,14,24(28)-trienol. CYP51B encodes the enzyme primarily responsible for sterol 14-alpha-demethylation, and plays an essential role in ascospore formation. CYP51A encodes an additional sterol 14-alpha-demethylase, induced on ergosterol depletion and responsible for the intrinsic variation in azole sensitivity. The third CYP51 isoform, CYP51C, does not encode a sterol 14-alpha-demethylase, but is required for full virulence on host wheat ears. The C-14 reductase ERG24 then reduces the C14=C15 double bond which leads to 4,4-dimethylfecosterol. A sequence of further demethylations at C-4, involving the C-4 demethylation complex containing the C-4 methylsterol oxidases ERG25, the sterol-4-alpha-carboxylate 3-dehydrogenase ERG26 and the 3-keto-steroid reductase ERG27, leads to the production of fecosterol via 4-methylfecosterol. ERG28 has a role as a scaffold to help anchor ERG25, ERG26 and ERG27 to the endoplasmic reticulum. The C-8 sterol isomerase ERG2 then catalyzes the reaction which results in unsaturation at C-7 in the B ring of sterols and thus converts fecosterol to episterol. The sterol-C5-desaturases ERG3A and ERG3BB then catalyze the introduction of a C-5 double bond in the B ring to produce 5-dehydroepisterol. The C-22 sterol desaturases ERG5A and ERG5B further convert 5-dehydroepisterol into ergosta-5,7,22,24(28)-tetraen-3beta-ol by forming the C-22(23) double bond in the sterol side chain. Finally, ergosta-5,7,22,24(28)-tetraen-3beta-ol is substrate of the C-24(28) sterol reductase ERG4 to produce ergosterol. The sequence is that of Delta(14)-sterol reductase ERG24B from Gibberella zeae (strain ATCC MYA-4620 / CBS 123657 / FGSC 9075 / NRRL 31084 / PH-1) (Wheat head blight fungus).